Here is a 226-residue protein sequence, read N- to C-terminus: Elongation factor G (226 aa).

It belongs to the GTP-binding elongation factor family. EF-G/EF-2 subfamily.

It is found in the cytoplasm. Catalyzes the GTP-dependent ribosomal translocation step during translation elongation. During this step, the ribosome changes from the pre-translocational (PRE) to the post-translocational (POST) state as the newly formed A-site-bound peptidyl-tRNA and P-site-bound deacylated tRNA move to the P and E sites, respectively. Catalyzes the coordinated movement of the two tRNA molecules, the mRNA and conformational changes in the ribosome. This Neisseria gonorrhoeae protein is Elongation factor G (fusA).